We begin with the raw amino-acid sequence, 357 residues long: Cyclic AMP-responsive element-binding protein 5 (357 aa).

A disordered region spans residues 114–239 (RQDQTPHHHL…FLERNRAAAT (126 aa)). Composition is skewed to basic residues over residues 120-129 (HHHLHSHPHQ) and 138-175 (PYPH…HPAH). A compositionally biased stretch (polar residues) spans 186 to 195 (TGNQAQVSPA). Positions 196 to 206 (TQQMQPTQTIQ) are enriched in low complexity. Residues 218 to 235 (VVDEDPDERRRKFLERNR) are compositionally biased toward basic and acidic residues. A bZIP domain is found at 224 to 287 (DERRRKFLER…AQLKQLLLTH (64 aa)). Residues 226–246 (RRRKFLERNRAAATRCRQKRK) form a basic motif region. The segment at 252–280 (LEKKAEELTQTNMQLQNEVSMLKNEVAQL) is leucine-zipper. The tract at residues 298 to 318 (ESQGYLSPESSPPASPVPACS) is disordered.

The protein belongs to the bZIP family. In terms of assembly, binds DNA as a homodimer or as a heterodimer with JUN or ATF2/CREBP1.

Its subcellular location is the nucleus. Its function is as follows. Binds to the cAMP response element and activates transcription. The protein is Cyclic AMP-responsive element-binding protein 5 (Creb5) of Mus musculus (Mouse).